A 124-amino-acid chain; its full sequence is Small ribosomal subunit protein eS6 (124 aa).

The protein belongs to the eukaryotic ribosomal protein eS6 family.

This is Small ribosomal subunit protein eS6 from Methanococcus maripaludis (strain C5 / ATCC BAA-1333).